The primary structure comprises 206 residues: Probable chemoreceptor glutamine deamidase CheD (206 aa).

It belongs to the CheD family.

The catalysed reaction is L-glutaminyl-[protein] + H2O = L-glutamyl-[protein] + NH4(+). Its function is as follows. Probably deamidates glutamine residues to glutamate on methyl-accepting chemotaxis receptors (MCPs), playing an important role in chemotaxis. The sequence is that of Probable chemoreceptor glutamine deamidase CheD from Laribacter hongkongensis (strain HLHK9).